Consider the following 202-residue polypeptide: Large ribosomal subunit protein uL4 (202 aa).

The disordered stretch occupies residues 45-71; it reads HAQKNRSEVSGSGKKPWRQKGTGRARV.

This sequence belongs to the universal ribosomal protein uL4 family. In terms of assembly, part of the 50S ribosomal subunit.

Functionally, one of the primary rRNA binding proteins, this protein initially binds near the 5'-end of the 23S rRNA. It is important during the early stages of 50S assembly. It makes multiple contacts with different domains of the 23S rRNA in the assembled 50S subunit and ribosome. Its function is as follows. Forms part of the polypeptide exit tunnel. The polypeptide is Large ribosomal subunit protein uL4 (Buchnera aphidicola subsp. Baizongia pistaciae (strain Bp)).